A 576-amino-acid chain; its full sequence is Proline--tRNA ligase (576 aa).

Belongs to the class-II aminoacyl-tRNA synthetase family. ProS type 1 subfamily. As to quaternary structure, homodimer.

The protein resides in the cytoplasm. The catalysed reaction is tRNA(Pro) + L-proline + ATP = L-prolyl-tRNA(Pro) + AMP + diphosphate. Functionally, catalyzes the attachment of proline to tRNA(Pro) in a two-step reaction: proline is first activated by ATP to form Pro-AMP and then transferred to the acceptor end of tRNA(Pro). As ProRS can inadvertently accommodate and process non-cognate amino acids such as alanine and cysteine, to avoid such errors it has two additional distinct editing activities against alanine. One activity is designated as 'pretransfer' editing and involves the tRNA(Pro)-independent hydrolysis of activated Ala-AMP. The other activity is designated 'posttransfer' editing and involves deacylation of mischarged Ala-tRNA(Pro). The misacylated Cys-tRNA(Pro) is not edited by ProRS. The protein is Proline--tRNA ligase of Pelobacter propionicus (strain DSM 2379 / NBRC 103807 / OttBd1).